A 304-amino-acid chain; its full sequence is MTDTTINNADKVAPTLVARVLNEALPYIRRFSGKTIVVKFGGNAMVDDALKQSFARDIVLMKLVGFNPVVVHGGGPQIGKLLERIGKHTEFVQGMRVTDAETMDVVEMVLGGLVNKEIVNLINSQGGRAVGLTGKDGGMIRARRLRLSHQDAAEQPPEIIDIGHVGEVEHIDPSVVDMLDHGAFIPVIAPIGVGEDGLSYNINADLVAGKIAEVLEAEKLMLLTNTPGVLSKQGELLTGLNPARVDALIQDGTIAGGMLPKIRCALDAVAGGVNAAHIIDGRVEHACLLELFTDAGVGTLIQRR.

Residues 74–75 (GG), arginine 96, and asparagine 201 contribute to the substrate site.

It belongs to the acetylglutamate kinase family. ArgB subfamily.

Its subcellular location is the cytoplasm. The enzyme catalyses N-acetyl-L-glutamate + ATP = N-acetyl-L-glutamyl 5-phosphate + ADP. It participates in amino-acid biosynthesis; L-arginine biosynthesis; N(2)-acetyl-L-ornithine from L-glutamate: step 2/4. Functionally, catalyzes the ATP-dependent phosphorylation of N-acetyl-L-glutamate. This is Acetylglutamate kinase from Alkalilimnicola ehrlichii (strain ATCC BAA-1101 / DSM 17681 / MLHE-1).